Here is a 163-residue protein sequence, read N- to C-terminus: NADH-quinone oxidoreductase subunit I (163 aa).

4Fe-4S ferredoxin-type domains follow at residues 53-83 (LRRY…IEAG) and 94-123 (VRYD…EGPN). [4Fe-4S] cluster is bound by residues Cys63, Cys66, Cys69, Cys73, Cys103, Cys106, Cys109, and Cys113.

This sequence belongs to the complex I 23 kDa subunit family. In terms of assembly, NDH-1 is composed of 14 different subunits. Subunits NuoA, H, J, K, L, M, N constitute the membrane sector of the complex. Requires [4Fe-4S] cluster as cofactor.

The protein resides in the cell inner membrane. The catalysed reaction is a quinone + NADH + 5 H(+)(in) = a quinol + NAD(+) + 4 H(+)(out). Functionally, NDH-1 shuttles electrons from NADH, via FMN and iron-sulfur (Fe-S) centers, to quinones in the respiratory chain. The immediate electron acceptor for the enzyme in this species is believed to be ubiquinone. Couples the redox reaction to proton translocation (for every two electrons transferred, four hydrogen ions are translocated across the cytoplasmic membrane), and thus conserves the redox energy in a proton gradient. The protein is NADH-quinone oxidoreductase subunit I of Brucella suis (strain ATCC 23445 / NCTC 10510).